Here is a 538-residue protein sequence, read N- to C-terminus: DALR anticodon-binding domain-containing protein 3 (538 aa).

In terms of assembly, part of a complex containing tRNA(Arg) and METTL2. Interacts with tRNA(Arg)(CCU) and tRNA(Arg)(UCU). Interacts with METTL2.

Functionally, involved in tRNA methylation. Facilitates the recognition and targeting of tRNA(Arg)(CCU) and tRNA(Arg)(UCU) substrates for N(3)-methylcytidine modification by METTL2. The polypeptide is DALR anticodon-binding domain-containing protein 3 (Dalrd3) (Rattus norvegicus (Rat)).